Here is a 92-residue protein sequence, read N- to C-terminus: UPF0223 protein SUB0967 (92 aa).

It belongs to the UPF0223 family.

This Streptococcus uberis (strain ATCC BAA-854 / 0140J) protein is UPF0223 protein SUB0967.